Here is a 467-residue protein sequence, read N- to C-terminus: 3-isopropylmalate dehydratase large subunit (467 aa).

[4Fe-4S] cluster is bound by residues C347, C407, and C410.

The protein belongs to the aconitase/IPM isomerase family. LeuC type 1 subfamily. Heterodimer of LeuC and LeuD. The cofactor is [4Fe-4S] cluster.

The catalysed reaction is (2R,3S)-3-isopropylmalate = (2S)-2-isopropylmalate. The protein operates within amino-acid biosynthesis; L-leucine biosynthesis; L-leucine from 3-methyl-2-oxobutanoate: step 2/4. Its function is as follows. Catalyzes the isomerization between 2-isopropylmalate and 3-isopropylmalate, via the formation of 2-isopropylmaleate. In Synechococcus sp. (strain JA-3-3Ab) (Cyanobacteria bacterium Yellowstone A-Prime), this protein is 3-isopropylmalate dehydratase large subunit.